The chain runs to 706 residues: Methionine--tRNA ligase (706 aa).

The 'HIGH' region motif lies at 13 to 23 (PYANGSIHLGH). Zn(2+)-binding residues include Cys144, Cys147, Cys157, and Cys160. The 'KMSKS' region signature appears at 336-340 (KMSKS). Residue Lys339 coordinates ATP. Residues 570 to 593 (QQTMNTETESHSPQRHGQAQQHPV) are disordered. The region spanning 604–706 (DFVKIDLRIA…SGAQPGMRVK (103 aa)) is the tRNA-binding domain.

The protein belongs to the class-I aminoacyl-tRNA synthetase family. MetG type 1 subfamily. As to quaternary structure, homodimer. It depends on Zn(2+) as a cofactor.

The protein localises to the cytoplasm. The catalysed reaction is tRNA(Met) + L-methionine + ATP = L-methionyl-tRNA(Met) + AMP + diphosphate. Functionally, is required not only for elongation of protein synthesis but also for the initiation of all mRNA translation through initiator tRNA(fMet) aminoacylation. This Nitrosomonas europaea (strain ATCC 19718 / CIP 103999 / KCTC 2705 / NBRC 14298) protein is Methionine--tRNA ligase.